Consider the following 526-residue polypeptide: Glucose-6-phosphate isomerase (526 aa).

E343 acts as the Proton donor in catalysis. Catalysis depends on residues H374 and K494.

Belongs to the GPI family.

Its subcellular location is the cytoplasm. It carries out the reaction alpha-D-glucose 6-phosphate = beta-D-fructose 6-phosphate. The protein operates within carbohydrate biosynthesis; gluconeogenesis. Its pathway is carbohydrate degradation; glycolysis; D-glyceraldehyde 3-phosphate and glycerone phosphate from D-glucose: step 2/4. Catalyzes the reversible isomerization of glucose-6-phosphate to fructose-6-phosphate. The protein is Glucose-6-phosphate isomerase of Dechloromonas aromatica (strain RCB).